A 995-amino-acid chain; its full sequence is tRNA wybutosine-synthesizing protein 2/3/4 (995 aa).

The interval 1–212 is tRNA wybutosine-synthesizing protein 3 homolog; sequence MDFEKRKAAT…GFSVALASNG (212 aa). Kelch repeat units lie at residues 284–335, 336–386, 387–436, 437–486, and 488–535; these read EVIV…MVGD, FMFV…SVGT, KVYI…AYGS, QSFM…VYKH, and IGII…SILG. The segment at 661–995 is tRNA wybutosine-synthesizing protein 2 homolog; it reads ERSEENNLTK…RHLVADVRCR (335 aa). S-adenosyl-L-methionine-binding positions include lysine 828 and 896 to 897; that span reads DN.

The protein in the C-terminal section; belongs to the class I-like SAM-binding methyltransferase superfamily. TRM5/TYW2 family. This sequence in the N-terminal section; belongs to the TYW3 family.

The enzyme catalyses 4-demethyl-7-[(3S)-3-amino-3-carboxypropyl]wyosine(37) in tRNA(Phe) + S-adenosyl-L-methionine = 7-[(3S)-3-amino-3-carboxypropyl]wyosine(37) in tRNA(Phe) + S-adenosyl-L-homocysteine + H(+). It catalyses the reaction 4-demethylwyosine(37) in tRNA(Phe) + S-adenosyl-L-methionine = 4-demethyl-7-[(3S)-3-amino-3-carboxypropyl]wyosine(37) in tRNA(Phe) + S-methyl-5'-thioadenosine + H(+). The protein operates within tRNA modification; wybutosine-tRNA(Phe) biosynthesis. In terms of biological role, S-adenosyl-L-methionine-dependent transferase that acts as a component of the wybutosine biosynthesis pathway. Wybutosine is a hyper modified guanosine with a tricyclic base found at the 3'-position adjacent to the anticodon of eukaryotic phenylalanine tRNA. The polypeptide is tRNA wybutosine-synthesizing protein 2/3/4 (Arabidopsis thaliana (Mouse-ear cress)).